An 865-amino-acid chain; its full sequence is V-type proton ATPase 116 kDa subunit a 3 (865 aa).

Topologically, residues 1–409 (MGSIYRSEHM…VNPAPWTIIS (409 aa)) are cytoplasmic. Positions 51–121 (FVNEVRRCDE…NKNCKVLKNN (71 aa)) form a coiled coil. The chain crosses the membrane as a helical span at residues 410-430 (FPFLFAVMFGDAGHGIIMLIA). Topologically, residues 431-453 (ASAFVIFEKKLISMKIKDEIFNT) are extracellular. The chain crosses the membrane as a helical span at residues 454 to 474 (FFGGRYVVLLMGMFAIYTGFI). The Cytoplasmic segment spans residues 475-556 (YNDFYSKSVN…FLNPMKMKTS (82 aa)). A helical membrane pass occupies residues 557 to 577 (ILLGISQMAFGIMLSLMNHIG). An N-linked (GlcNAc...) asparagine glycan is attached at N578. Residues 578–583 (NRSVVD) are Extracellular-facing. A helical transmembrane segment spans residues 584 to 604 (IVFVFIPQCLFLGCIFVYLCL). Over 605 to 623 (QVLMKWIFFYVKPAYIFGR) the chain is Cytoplasmic. Residues 624–644 (LYPGSNCAPSLLIGLINMFMV) form a helical membrane-spanning segment. The Extracellular segment spans residues 645-688 (KSRDASFAHDVGTAAGKEWVIVNGQNVTYTINDQCYLQQWYPNQ). N-linked (GlcNAc...) asparagine glycosylation is found at N670 and N687. Residues 689-709 (SLVELILLLIAVVSVPVMLLV) traverse the membrane as a helical segment. The Cytoplasmic portion of the chain corresponds to 710–798 (KPFYIRWRHS…LTMGGWGGSA (89 aa)). The helical transmembrane segment at 799 to 819 (AITILFYFIFSILSVCILILM) threads the bilayer. At 820–865 (EGLSAFLHAIRLHWVEFQSKFYGGTGIQFEPFCFTKIIRVYEGLDQ) the chain is on the extracellular side.

This sequence belongs to the V-ATPase 116 kDa subunit family. V-ATPase is a heteromultimeric enzyme made up of two complexes: the ATP-hydrolytic V1 complex and the proton translocation V0 complex. The V1 complex consists of three catalytic AB heterodimers that form a heterohexamer, three peripheral stalks each consisting of EG heterodimers, one central rotor including subunits D and F, and the regulatory subunits C and H. The proton translocation complex V0 consists of the proton transport subunit a, a ring of proteolipid subunits c9c'', rotary subunit d, subunits e and f, and the accessory subunits vah-19/Ac45 and vah-20/PRR. Interacts with V-type proton ATPase subunit C vha-11.

It localises to the apical cell membrane. Its function is as follows. Subunit of the V0 complex of vacuolar(H+)-ATPase (V-ATPase), a multisubunit enzyme composed of a peripheral complex (V1) that hydrolyzes ATP and a membrane integral complex (V0) that translocates protons. V-ATPase is responsible for acidifying and maintaining the pH of intracellular compartments and in some cell types, is targeted to the plasma membrane, where it is responsible for acidifying the extracellular environment. In the intestine, required for the rhythmic defecation behavior by promoting acidification in the gut lumen following defecation. Also, luminal acidification is required for nutrient uptake. The protein is V-type proton ATPase 116 kDa subunit a 3 of Caenorhabditis elegans.